A 355-amino-acid chain; its full sequence is 4-dimethylallyltryptophan N-methyltransferase easF (355 aa).

This sequence belongs to the methyltransferase superfamily. In terms of assembly, homodimer.

The catalysed reaction is 4-(3-methylbut-2-enyl)-L-tryptophan + S-adenosyl-L-methionine = 4-(3-methylbut-2-enyl)-L-abrine + S-adenosyl-L-homocysteine + H(+). The protein operates within alkaloid biosynthesis; ergot alkaloid biosynthesis. Functionally, 4-dimethylallyltryptophan N-methyltransferase; part of the gene cluster that mediates the biosynthesis of fungal ergot alkaloid. DmaW catalyzes the first step of ergot alkaloid biosynthesis by condensing dimethylallyl diphosphate (DMAP) and tryptophan to form 4-dimethylallyl-L-tryptophan. The second step is catalyzed by the methyltransferase easF that methylates 4-dimethylallyl-L-tryptophan in the presence of S-adenosyl-L-methionine, resulting in the formation of 4-dimethylallyl-L-abrine. The catalase easC and the FAD-dependent oxidoreductase easE then transform 4-dimethylallyl-L-abrine to chanoclavine-I which is further oxidized by easD in the presence of NAD(+), resulting in the formation of chanoclavine-I aldehyde. Agroclavine dehydrogenase easG then mediates the conversion of chanoclavine-I aldehyde to agroclavine via a non-enzymatic adduct reaction: the substrate is an iminium intermediate that is formed spontaneously from chanoclavine-I aldehyde in the presence of glutathione. Further conversion of agroclavine to paspalic acid is a two-step process involving oxidation of agroclavine to elymoclavine and of elymoclavine to paspalic acid, the second step being performed by the elymoclavine oxidase cloA. However, cloA does not encode a functional enzyme indicating that C.fusiformis terminates its ergot alkaloid pathway at elymoclavine. The protein is 4-dimethylallyltryptophan N-methyltransferase easF of Claviceps fusiformis (Ergot fungus).